Consider the following 84-residue polypeptide: UPF0473 protein CLI_2624 (84 aa).

It belongs to the UPF0473 family.

The polypeptide is UPF0473 protein CLI_2624 (Clostridium botulinum (strain Langeland / NCTC 10281 / Type F)).